The sequence spans 329 residues: Terpene synthase 7 (329 aa).

A DDxx(x)D/E motif motif is present at residues 99 to 104 (DDLYLE). Positions 230-238 (NDIHSFNKE) match the NDxxSxxxD/E motif motif.

It belongs to the terpene synthase family.

In terms of biological role, terpene synthase that converts its substrate farnesyl diphosphate (FPP) into 6 yet unidentified sesquiterpenes. This Dictyostelium purpureum (Slime mold) protein is Terpene synthase 7.